Reading from the N-terminus, the 159-residue chain is Cytochrome c-type biogenesis protein CcmE (159 aa).

Topologically, residues 1 to 23 (MSSQSFHNSPSLRVILKQRKKKR) are cytoplasmic. The chain crosses the membrane as a helical; Signal-anchor for type II membrane protein span at residues 24–44 (LLIVLFCCLIIAIATSLITYA). Residues 45–159 (LRNTVSFFRM…RLNKHHRVEK (115 aa)) lie on the Periplasmic side of the membrane. Heme-binding residues include histidine 138 and tyrosine 142.

Belongs to the CcmE/CycJ family.

It is found in the cell inner membrane. Heme chaperone required for the biogenesis of c-type cytochromes. Transiently binds heme delivered by CcmC and transfers the heme to apo-cytochromes in a process facilitated by CcmF and CcmH. The protein is Cytochrome c-type biogenesis protein CcmE of Bartonella henselae (strain ATCC 49882 / DSM 28221 / CCUG 30454 / Houston 1) (Rochalimaea henselae).